Consider the following 474-residue polypeptide: tRNA-2-methylthio-N(6)-dimethylallyladenosine synthase (474 aa).

One can recognise an MTTase N-terminal domain in the interval 3–120; sequence KKLHIKTWGC…LPEMIDQIRD (118 aa). [4Fe-4S] cluster-binding residues include cysteine 12, cysteine 49, cysteine 83, cysteine 157, cysteine 161, and cysteine 164. The Radical SAM core domain occupies 143 to 375; it reads RADGPSAFVS…QDRITQQAMR (233 aa). In terms of domain architecture, TRAM spans 378–441; the sequence is RQMLGTVQRI…TNSLRGTFVR (64 aa).

The protein belongs to the methylthiotransferase family. MiaB subfamily. In terms of assembly, monomer. It depends on [4Fe-4S] cluster as a cofactor.

It localises to the cytoplasm. It catalyses the reaction N(6)-dimethylallyladenosine(37) in tRNA + (sulfur carrier)-SH + AH2 + 2 S-adenosyl-L-methionine = 2-methylsulfanyl-N(6)-dimethylallyladenosine(37) in tRNA + (sulfur carrier)-H + 5'-deoxyadenosine + L-methionine + A + S-adenosyl-L-homocysteine + 2 H(+). Functionally, catalyzes the methylthiolation of N6-(dimethylallyl)adenosine (i(6)A), leading to the formation of 2-methylthio-N6-(dimethylallyl)adenosine (ms(2)i(6)A) at position 37 in tRNAs that read codons beginning with uridine. The sequence is that of tRNA-2-methylthio-N(6)-dimethylallyladenosine synthase from Shewanella sediminis (strain HAW-EB3).